Consider the following 277-residue polypeptide: Phosphatidylglycerol--prolipoprotein diacylglyceryl transferase (277 aa).

Helical transmembrane passes span 22–42 (WYGV…LSEA), 51–71 (IIVD…RIYY), 89–109 (IWHG…TAII), and 116–136 (ISFW…QAIG). Residue Arg137 coordinates a 1,2-diacyl-sn-glycero-3-phospho-(1'-sn-glycerol). Helical transmembrane passes span 177–197 (QPTF…LLII), 205–225 (GELF…IEGM), and 235–255 (FRVS…LIIY).

Belongs to the Lgt family.

It is found in the cell membrane. It catalyses the reaction L-cysteinyl-[prolipoprotein] + a 1,2-diacyl-sn-glycero-3-phospho-(1'-sn-glycerol) = an S-1,2-diacyl-sn-glyceryl-L-cysteinyl-[prolipoprotein] + sn-glycerol 1-phosphate + H(+). It functions in the pathway protein modification; lipoprotein biosynthesis (diacylglyceryl transfer). In terms of biological role, catalyzes the transfer of the diacylglyceryl group from phosphatidylglycerol to the sulfhydryl group of the N-terminal cysteine of a prolipoprotein, the first step in the formation of mature lipoproteins. In Listeria welshimeri serovar 6b (strain ATCC 35897 / DSM 20650 / CCUG 15529 / CIP 8149 / NCTC 11857 / SLCC 5334 / V8), this protein is Phosphatidylglycerol--prolipoprotein diacylglyceryl transferase.